We begin with the raw amino-acid sequence, 313 residues long: MTHVPVLYTQAMEGLRVVENGTYLDGTFGRGGHARGVLQQLGPGGRLLVMDKDPEAIAMAERAFSCDPRVVIRHGSFALLAQLAAPQSLDGVLFDLGVSSPQLDVPERGFSFAKDGPLDMRMDPEMGESAAQWLARVSEREIADVLWTYGEEKQSRRIARAIVAYRANQPLLRTVQLAELIASVMLRTKFGACKSRIHPATRSFQGIRIHVNRELVDLEVGLEAALAALRPGGRLVVISFHSLEDRIVKQFISRHSKVPPTNRRLPEVQTFVPLLRMIGRAIKADEDELEVNPRARSAVLRVAEKLDVLGAVR.

S-adenosyl-L-methionine contacts are provided by residues 31 to 33 (GGH), aspartate 51, phenylalanine 77, aspartate 95, and glutamine 102.

It belongs to the methyltransferase superfamily. RsmH family.

It localises to the cytoplasm. It carries out the reaction cytidine(1402) in 16S rRNA + S-adenosyl-L-methionine = N(4)-methylcytidine(1402) in 16S rRNA + S-adenosyl-L-homocysteine + H(+). Specifically methylates the N4 position of cytidine in position 1402 (C1402) of 16S rRNA. This is Ribosomal RNA small subunit methyltransferase H from Xylella fastidiosa (strain M23).